A 21-amino-acid chain; its full sequence is Venom nerve growth factor Bco12 (21 aa).

Belongs to the NGF-beta family. Homodimer; non-covalently linked. In terms of processing, glycosylated. Expressed by the venom gland.

It is found in the secreted. In terms of biological role, nerve growth factor is important for the development and maintenance of the sympathetic and sensory nervous systems. It stimulates division and differentiation of sympathetic and embryonic sensory neurons as well as basal forebrain cholinergic neurons in the brain. Its relevance in the snake venom is not clear. However, it has been shown to inhibit metalloproteinase-dependent proteolysis of platelet glycoprotein Ib alpha, suggesting a metalloproteinase inhibition to prevent metalloprotease autodigestion and/or protection against prey proteases. Binds a lipid between the two protein chains in the homodimer. The lipid-bound form promotes histamine relase from mouse mast cells, contrary to the lipid-free form. The protein is Venom nerve growth factor Bco12 of Bothrops cotiara (Cotiara).